Here is a 492-residue protein sequence, read N- to C-terminus: GTPase Der (492 aa).

EngA-type G domains are found at residues 3-167 and 188-363; these read PVVA…PAPE and ICIA…AQYA. Residues 9–16, 56–60, 119–122, 194–201, 241–245, and 306–309 each bind GTP; these read GRPNVGKS, DTGGF, NKVE, DTAGI, and NKWD. One can recognise a KH-like domain in the interval 364–448; that stretch reads YRINTGLLNR…PIRLLFRAKT (85 aa). A disordered region spans residues 464 to 492; the sequence is VEKKEKKTTRRKKERKEQSRRKRVRDLKG. Residues 469–492 show a composition bias toward basic residues; sequence KKTTRRKKERKEQSRRKRVRDLKG.

Belongs to the TRAFAC class TrmE-Era-EngA-EngB-Septin-like GTPase superfamily. EngA (Der) GTPase family. In terms of assembly, associates with the 50S ribosomal subunit.

GTPase that plays an essential role in the late steps of ribosome biogenesis. This is GTPase Der from Desulforapulum autotrophicum (strain ATCC 43914 / DSM 3382 / VKM B-1955 / HRM2) (Desulfobacterium autotrophicum).